The sequence spans 310 residues: Porphobilinogen deaminase (310 aa).

Position 242 is an S-(dipyrrolylmethanemethyl)cysteine (Cys-242).

It belongs to the HMBS family. Monomer. Dipyrromethane serves as cofactor.

The enzyme catalyses 4 porphobilinogen + H2O = hydroxymethylbilane + 4 NH4(+). The protein operates within porphyrin-containing compound metabolism; protoporphyrin-IX biosynthesis; coproporphyrinogen-III from 5-aminolevulinate: step 2/4. Its function is as follows. Tetrapolymerization of the monopyrrole PBG into the hydroxymethylbilane pre-uroporphyrinogen in several discrete steps. The sequence is that of Porphobilinogen deaminase from Alcanivorax borkumensis (strain ATCC 700651 / DSM 11573 / NCIMB 13689 / SK2).